Consider the following 1538-residue polypeptide: MADNPDPSSLLPDVFSPATRDWFLRAFKQPTAVQPQTWHVAARSEHALVIAPTGSGKTLAAFLYALDRLFREGGEDTREAHKRKTSRILYISPIKALGTDVQRNLQIPLKGIADERRRRGETEVNLRVGIRTGDTPAQERSKLTRNPPDILITTPESLYLMLTSRARETLRGVETVIIDEVHAVAGSKRGAHLALSLERLDALLHTSAQRIGLSATVRSASDVAAFLGGDRPVTVVNPPAMRHPQIRIVVPVANMDDVSSVASGTGEDSHAGREGSIWPYIETGILDEVLRHRSTIVFTNSRGLAEKLTARLNELYAARLQRSPSIAVDAAHFESTSGATSNRVQSSDVFIARSHHGSVSKEQRAITEQALKSGELRCVVATSSLELGIDMGAVDLVIQVATPLSVASGLQRIGRAGHQVGGVSKGLFFPRTRRDLVDSAVIVECMFAGRLENLTPPHNPLDVLAQQTVAAAAMDALQVDEWYSRVRRAAPWKDLPRRVFDATLDMLSGRYPSGDFSAFRPKLVWNRETGILTARPGAQLLAVTSGGTIPDRGMYSVLLPEGEEKAGSRRVGELDEEMVYESRVNDIITLGATSWRIQQITRDQVIVTPAPGRSARLPFWRGEGNGRPAELGEMIGDFLHLLADGAFFSGTIPPWLAEENTIANIQGLIEEQRNATGIVPGSRHLVLERCRDEIGDWRIILHSPYGRRVHEPWAVAIAGRIHALWGADASVVASDDGIVARIPDTDGKLPDAAIFLFEPEKLLQIVREAVGSSALFAARFRECAARALLMPGRTPGHRTPLWQQRLRASQLLEIAQGYPDFPVILETLRECLQDVYDLPALERLMRRLNGGEIQISDVTTTTPSPFATSLLFGYVAEFMYQSDAPLAERRASVLSLDSELLRNLLGQVDPGELLDPQVIRQVEEELQRLAPGRRAKGEEGLFDLLRELGPMTVEDLAQRHTGSSEEVASYLENLLAVKRIFPAMISGQERLACMDDAARLRDALGVRLPESLPEIYLHRVSYPLRDLFLRYLRAHALVTAEQLAHEFSLGIAIVEEQLQQLREQGLVMNLQQDIWVSDEVFRRLRLRSLQAAREATRPVAATTYARLLLERQGVLPATDGSPALFASTSPGVYEGVDGVMRVIEQLAGVGLPASLWESQILPARVRDYSSEMLDELLATGAVIWSGQKKLGEDDGLVALHLQEYAAESFTPAEADQANRSALQQAIVAVLADGGAWFAQQISQRIRDKIGESVDLSALQEALWALVWQGVITSDIWAPLRALTRSSSNARTSTRRSHRARRGRPVYAQPVSPRVSYNTPNLAGRWSLLQVEPLNDTERMLALAENMLDRYGIISRQAVIAENIPGGFPSMQTLCRSMEDSGRIMRGRFVEGLGGAQFAERLTIDRLRDLATQATQTRHYTPVALSANDPANVWGNLLPWPAHPATLVPTRRAGALVVVSGGKLLLYLAQGGKKMLVWQEKEELLAPEVFHALTTALRREPRLRFTLTEVNDLPVRQTPMFTLLREAGFSSSPQGLDWG.

The tract at residues 1-897 is lhr-Core; that stretch reads MADNPDPSSL…ERRASVLSLD (897 aa). ATP-binding residues include Q34, K57, T58, D179, E180, I398, R415, and H418. A Helicase ATP-binding domain is found at 38–235; the sequence is WHVAARSEHA…FLGGDRPVTV (198 aa). A DEVH box motif is present at residues 179–182; sequence DEVH. Residues 284–462 form the Helicase C-terminal domain; that stretch reads GILDEVLRHR…NLTPPHNPLD (179 aa). The beta-sheet bundle stretch occupies residues 463–552; the sequence is VLAQQTVAAA…VTSGGTIPDR (90 aa). The WH domain stretch occupies residues 553–623; it reads GMYSVLLPEG…SARLPFWRGE (71 aa). The segment at 624 to 897 is domain 4; sequence GNGRPAELGE…ERRASVLSLD (274 aa). The interval 898 to 1538 is lhr-CTD; the sequence is SELLRNLLGQ…SSSPQGLDWG (641 aa). The interval 1287–1312 is disordered; that stretch reads SNARTSTRRSHRARRGRPVYAQPVSP. Residues 1292-1303 show a composition bias toward basic residues; sequence STRRSHRARRGR.

It belongs to the Lhr helicase family. In terms of assembly, homooligomerizes, probably a homotetramer. Ca(2+) serves as cofactor. The cofactor is Uracil deglycosylase activity does not require a cofactor..

The catalysed reaction is Couples ATP hydrolysis with the unwinding of duplex DNA by translocating in the 3'-5' direction.. The enzyme catalyses ATP + H2O = ADP + phosphate + H(+). It catalyses the reaction Hydrolyzes single-stranded DNA or mismatched double-stranded DNA and polynucleotides, releasing free uracil.. In terms of biological role, a 3'-5' helicase probably involved in DNA repair. Translocates in an ATP-dependent manner 3'-to-5' on single-stranded (ss)DNA, unwinding any encountered duplex nucleic acid. An RNA:DNA hybrid with a 3'-ssDNA loading strand is a 4.5-fold better helicase substrate than 3'-tailed double-stranded (ds)DNA; substrates where the helicase loads on a 3'-ssRNA tail (DNA:RNA and RNA:RNA) are not unwound. Unlike its M.smegmatis counterpart, the ATPase is not ssDNA-dependent. Forms a clamp around the ssDNA loading strand. Functionally, excises uracil residues from DNA; forked DNA with a dU residue is the best substrate followed by ssDNA. Inactive on dsDNA with a dU residue or DNA with an 8-oxoguanine residue. Uracil residues in DNA can arise as a result of misincorporation of dUMP residues by DNA polymerase or due to deamination of cytosine. The chain is Lhr helicase/uracil glycosylase from Escherichia coli (strain K12).